Reading from the N-terminus, the 440-residue chain is MNQGVPPKISFVSLGCPKALVDSERIITRLRAEGYELARKHDGADIVIVSTCGFLDSAKQESLGAIGEAMAENGKVIVTGCMGAEPEQIEKEYPNLLSITGPQQYESVLDAVHRALPPLHNPHLDLLPPQGIKLTPRHYAYLKISEGCNNRCTFCIIPKLRGDLVSRPADDVLREAEKLVVAGVKELLVVSQDTSAYGIDIKYAPSAWKDREVRARFVDLARELGELGAWVRLQYVYPYPHVDDVIPLMGGNILPYLDIPFQHANTEVLKRMRRPAAQDKTLARIHKWREQCPDLTLRSTFIVGFPGETESEFQDLLDWLDEAQIDRLGCFKYEPVAGATSNALENPVPDEIKTARWNALMARQQKISAQRLKRKVGTRQQVIIDEVGPSVAKGRSKADAPQIDGSVYVASRRPLKVGDIVTVKIERADEYDLHGSVAGF.

The 111-residue stretch at 7-117 folds into the MTTase N-terminal domain; the sequence is PKISFVSLGC…VLDAVHRALP (111 aa). Positions 16, 52, 81, 148, 152, and 155 each coordinate [4Fe-4S] cluster. Positions 134-370 constitute a Radical SAM core domain; sequence LTPRHYAYLK…MARQQKISAQ (237 aa). The 67-residue stretch at 373 to 439 folds into the TRAM domain; that stretch reads KRKVGTRQQV…EYDLHGSVAG (67 aa).

The protein belongs to the methylthiotransferase family. RimO subfamily. Requires [4Fe-4S] cluster as cofactor.

The protein localises to the cytoplasm. The enzyme catalyses L-aspartate(89)-[ribosomal protein uS12]-hydrogen + (sulfur carrier)-SH + AH2 + 2 S-adenosyl-L-methionine = 3-methylsulfanyl-L-aspartate(89)-[ribosomal protein uS12]-hydrogen + (sulfur carrier)-H + 5'-deoxyadenosine + L-methionine + A + S-adenosyl-L-homocysteine + 2 H(+). Catalyzes the methylthiolation of an aspartic acid residue of ribosomal protein uS12. This chain is Ribosomal protein uS12 methylthiotransferase RimO, found in Afipia carboxidovorans (strain ATCC 49405 / DSM 1227 / KCTC 32145 / OM5) (Oligotropha carboxidovorans).